The primary structure comprises 224 residues: UPF0758 protein Bpro_0948 (224 aa).

In terms of domain architecture, MPN spans 102-224 (LFSTPQAVRD…AVSMAELGLL (123 aa)). Zn(2+) contacts are provided by histidine 173, histidine 175, and aspartate 186. The JAMM motif signature appears at 173–186 (HNHPSGAATPSRAD).

It belongs to the UPF0758 family.

This Polaromonas sp. (strain JS666 / ATCC BAA-500) protein is UPF0758 protein Bpro_0948.